The sequence spans 230 residues: Probable fimbrial chaperone SfmC (230 aa).

Positions 1–23 (MMTKIKLLMLIIFYLIISASAHA) are cleaved as a signal peptide.

This sequence belongs to the periplasmic pilus chaperone family.

The protein localises to the periplasm. In terms of biological role, part of the sfmACDHF fimbrial operon. Could contribute to adhesion to various surfaces in specific environmental niches. Increases adhesion to eukaryotic T24 bladder epithelial cells in the absence of fim genes. The polypeptide is Probable fimbrial chaperone SfmC (sfmC) (Escherichia coli (strain K12)).